The sequence spans 408 residues: S-adenosylmethionine sensor upstream of mTORC1 (408 aa).

Over residues 1-16 (MEAAPRSRPRPGGAAA) the composition is skewed to low complexity. The disordered stretch occupies residues 1 to 37 (MEAAPRSRPRPGGAAASPPPPPPPPPPEQERKLEQEK). Residues 17 to 27 (SPPPPPPPPPP) show a composition bias toward pro residues. Over residues 28–37 (EQERKLEQEK) the composition is skewed to basic and acidic residues. S-adenosyl-L-methionine contacts are provided by Arg-97, Gly-175, Asp-193, Asp-205, Phe-206, and Ser-247.

It belongs to the BMT2/SAMTOR family. In terms of assembly, interacts with the GATOR1 complex; interaction is disrupted when SAMTOR binds S-adenosyl-L-methionine. Interacts with the KICSTOR complex; interaction is disrupted when SAMTOR binds S-adenosyl-L-methionine.

S-adenosyl-L-methionine-binding protein that acts as an inhibitor of mTORC1 signaling via interaction with the GATOR1 and KICSTOR complexes. Acts as a sensor of S-adenosyl-L-methionine to signal methionine sufficiency to mTORC1: in presence of methionine, binds S-adenosyl-L-methionine, leading to disrupt interaction with the GATOR1 and KICSTOR complexes and promote mTORC1 signaling. Upon methionine starvation, S-adenosyl-L-methionine levels are reduced, thereby promoting the association with GATOR1 and KICSTOR, leading to inhibit mTORC1 signaling. Probably also acts as a S-adenosyl-L-methionine-dependent methyltransferase. The polypeptide is S-adenosylmethionine sensor upstream of mTORC1 (Gallus gallus (Chicken)).